Consider the following 245-residue polypeptide: TLC domain-containing protein 5 (245 aa).

6 helical membrane passes run 1–21 (MALALCLQVLCSLCGWLSLYI), 38–58 (LVTFTHGVLSIGLSAYIGFID), 75–95 (VHVLCLTLGYFIFDLGWCVYF), 99–119 (GALMLAHHTLSILGIIMALVL), 162–182 (FLFVALFTGVRIGVGACLLFC), and 191–211 (WFVKAGGVAMYAVSWCFMFSI). Residues 29 to 204 (HRSYEWSCRL…AGGVAMYAVS (176 aa)) form the TLC domain.

This sequence belongs to the TLCD5 family.

It is found in the membrane. This Homo sapiens (Human) protein is TLC domain-containing protein 5.